A 441-amino-acid chain; its full sequence is Bacteria-responsive protein 1 (441 aa).

The N-terminal stretch at 1–18 (MWFFKVGALLFLAALVSA) is a signal peptide. Asn-20 carries an N-linked (GlcNAc...) asparagine glycan. In terms of domain architecture, GH18 spans 25-441 (PKVLCYYDGQ…PILRAAKYRL (417 aa)). A disulfide bond links Cys-29 and Cys-56. Asn-225 carries N-linked (GlcNAc...) asparagine glycosylation.

Belongs to the glycosyl hydrolase 18 family. IDGF subfamily. In terms of tissue distribution, salivary gland (at protein level).

Its subcellular location is the secreted. In terms of biological role, promotes recruitment of host neutrophils at the bite site. Induces expression of IL1B and IL6 in the skin of the host. Functionally, (Microbial infection) Enhances Zika virus replication and exacerbates disease pathogenesis in the host. The protein is Bacteria-responsive protein 1 of Aedes aegypti (Yellowfever mosquito).